The following is a 291-amino-acid chain: Protease HtpX homolog (291 aa).

Helical transmembrane passes span 4–24 (VVLF…SARV) and 38–58 (MGML…ISLL). His144 is a Zn(2+) binding site. Glu145 is an active-site residue. Zn(2+) is bound at residue His148. Helical transmembrane passes span 159–179 (LIQG…AYAI) and 199–219 (ISSI…VMYF). Glu224 provides a ligand contact to Zn(2+).

This sequence belongs to the peptidase M48B family. It depends on Zn(2+) as a cofactor.

The protein resides in the cell inner membrane. This chain is Protease HtpX homolog, found in Chlorobium phaeobacteroides (strain DSM 266 / SMG 266 / 2430).